The chain runs to 395 residues: Succinyl-diaminopimelate desuccinylase (395 aa).

Position 74 (His-74) interacts with Zn(2+). Asp-76 is an active-site residue. Asp-107 provides a ligand contact to Zn(2+). Glu-141 (proton acceptor) is an active-site residue. Positions 142, 170, and 368 each coordinate Zn(2+).

It belongs to the peptidase M20A family. DapE subfamily. As to quaternary structure, homodimer. Zn(2+) serves as cofactor. Co(2+) is required as a cofactor.

The enzyme catalyses N-succinyl-(2S,6S)-2,6-diaminopimelate + H2O = (2S,6S)-2,6-diaminopimelate + succinate. The protein operates within amino-acid biosynthesis; L-lysine biosynthesis via DAP pathway; LL-2,6-diaminopimelate from (S)-tetrahydrodipicolinate (succinylase route): step 3/3. In terms of biological role, catalyzes the hydrolysis of N-succinyl-L,L-diaminopimelic acid (SDAP), forming succinate and LL-2,6-diaminopimelate (DAP), an intermediate involved in the bacterial biosynthesis of lysine and meso-diaminopimelic acid, an essential component of bacterial cell walls. This is Succinyl-diaminopimelate desuccinylase from Brucella canis (strain ATCC 23365 / NCTC 10854 / RM-666).